Reading from the N-terminus, the 300-residue chain is Ribosomal protein L11 methyltransferase (300 aa).

The S-adenosyl-L-methionine site is built by threonine 152, glycine 173, aspartate 195, and asparagine 234.

The protein belongs to the methyltransferase superfamily. PrmA family.

The protein localises to the cytoplasm. The enzyme catalyses L-lysyl-[protein] + 3 S-adenosyl-L-methionine = N(6),N(6),N(6)-trimethyl-L-lysyl-[protein] + 3 S-adenosyl-L-homocysteine + 3 H(+). Its function is as follows. Methylates ribosomal protein L11. The protein is Ribosomal protein L11 methyltransferase of Burkholderia pseudomallei (strain 1710b).